Consider the following 194-residue polypeptide: MDVNNVELIISAVRPEQYPETDLPEYALAGRSNVGKSSFINTMIRRKSMARISQKPGKTQTLNFYKIEEALFFVDVPGYGFAKVSKTEREKWGVMIETYITSREQLRGVIQIVDLRHKPTEDDRMMYEFLKYYDIPVIVIATKADKIPRSKWQKNAKIVRETLDFDPDDKFVLFSSETKMGKDEAWQFIKEGME.

Residues 22 to 194 (DLPEYALAGR…AWQFIKEGME (173 aa)) enclose the EngB-type G domain. GTP is bound by residues 30–37 (GRSNVGKS), 57–61 (GKTQT), 75–78 (DVPG), 142–145 (TKAD), and 174–176 (FSS). 2 residues coordinate Mg(2+): Ser-37 and Thr-59.

Belongs to the TRAFAC class TrmE-Era-EngA-EngB-Septin-like GTPase superfamily. EngB GTPase family. The cofactor is Mg(2+).

Necessary for normal cell division and for the maintenance of normal septation. The chain is Probable GTP-binding protein EngB from Listeria monocytogenes serovar 1/2a (strain ATCC BAA-679 / EGD-e).